The primary structure comprises 293 residues: ATP synthase gamma chain (293 aa).

This sequence belongs to the ATPase gamma chain family. In terms of assembly, F-type ATPases have 2 components, CF(1) - the catalytic core - and CF(0) - the membrane proton channel. CF(1) has five subunits: alpha(3), beta(3), gamma(1), delta(1), epsilon(1). CF(0) has three main subunits: a, b and c.

Its subcellular location is the cell inner membrane. Functionally, produces ATP from ADP in the presence of a proton gradient across the membrane. The gamma chain is believed to be important in regulating ATPase activity and the flow of protons through the CF(0) complex. This Nitrosospira multiformis (strain ATCC 25196 / NCIMB 11849 / C 71) protein is ATP synthase gamma chain.